A 529-amino-acid chain; its full sequence is Nucleolar protein 58 (529 aa).

Residue threonine 34 is modified to Phosphothreonine. Serine 109 carries the post-translational modification Phosphoserine. A sufficient for interaction with NOPCHAP1 region spans residues 155-400 (ADKVDTMIVQ…LEARLRTLED (246 aa)). Lysine 157 is covalently cross-linked (Glycyl lysine isopeptide (Lys-Gly) (interchain with G-Cter in SUMO2)). In terms of domain architecture, Nop spans 282–400 (IAPNVTVMVG…LEARLRTLED (119 aa)). A phosphoserine mark is found at serine 304 and serine 351. Residues lysine 353, lysine 411, lysine 415, lysine 422, lysine 426, lysine 441, lysine 444, and lysine 465 each participate in a glycyl lysine isopeptide (Lys-Gly) (interchain with G-Cter in SUMO2) cross-link. Positions 409-529 (TGKALAKTEK…KKKKKRENED (121 aa)) are disordered. The segment covering 414–427 (AKTEKYEHKSEVKT) has biased composition (basic and acidic residues). Lysine 467 is covalently cross-linked (Glycyl lysine isopeptide (Lys-Gly) (interchain with G-Cter in SUMO); alternate). Lysine 467 participates in a covalent cross-link: Glycyl lysine isopeptide (Lys-Gly) (interchain with G-Cter in SUMO1); alternate. Lysine 467 participates in a covalent cross-link: Glycyl lysine isopeptide (Lys-Gly) (interchain with G-Cter in SUMO2); alternate. Positions 469–481 (EEEEEEKVAEEEE) are enriched in acidic residues. At serine 483 the chain carries Phosphoserine. Lysine 485 participates in a covalent cross-link: Glycyl lysine isopeptide (Lys-Gly) (interchain with G-Cter in SUMO2). Basic residues predominate over residues 485–495 (KKKKKRGKKKH). Lysine 497 participates in a covalent cross-link: Glycyl lysine isopeptide (Lys-Gly) (interchain with G-Cter in SUMO); alternate. Lysine 497 is covalently cross-linked (Glycyl lysine isopeptide (Lys-Gly) (interchain with G-Cter in SUMO2); alternate). 2 positions are modified to phosphoserine: serine 502 and serine 514. Positions 517–529 (KKKKKKKKRENED) are enriched in basic residues.

This sequence belongs to the NOP5/NOP56 family. As to quaternary structure, core component of box C/D small nucleolar ribonucleoprotein (snoRNP) particles; the core proteins SNU13, NOP56, NOP58 and FBL or FBLL1 assemble stepwise onto the snoRNA. Interacts with NOLC1/Nopp140. Interacts with NOPCHAP1, NUFIP1, RUVBL1 and RUVBL2; NOPCHAP1 bridges the association of NOP58 with RUVBL1:RUVBL2 and NUFIP1. Interacts with PIH1D1. Part of the small subunit (SSU) processome, composed of more than 70 proteins and the RNA chaperone small nucleolar RNA (snoRNA) U3. In terms of processing, sumoylation is essential for high-affinity binding to snoRNAs. Ubiquitous.

The protein localises to the nucleus. It localises to the nucleolus. It is found in the nucleoplasm. Its function is as follows. Required for the biogenesis of box C/D snoRNAs such as U3, U8 and U14 snoRNAs. Part of the small subunit (SSU) processome, first precursor of the small eukaryotic ribosomal subunit. During the assembly of the SSU processome in the nucleolus, many ribosome biogenesis factors, an RNA chaperone and ribosomal proteins associate with the nascent pre-rRNA and work in concert to generate RNA folding, modifications, rearrangements and cleavage as well as targeted degradation of pre-ribosomal RNA by the RNA exosome. Core component of box C/D small nucleolar ribonucleoprotein (snoRNP) complexes that function in methylation of multiple sites on ribosomal RNAs (rRNAs) and messenger RNAs (mRNAs). The protein is Nucleolar protein 58 of Homo sapiens (Human).